We begin with the raw amino-acid sequence, 140 residues long: Holo-[acyl-carrier-protein] synthase (140 aa).

The Mg(2+) site is built by Asp-8 and Glu-62.

It belongs to the P-Pant transferase superfamily. AcpS family. It depends on Mg(2+) as a cofactor.

It localises to the cytoplasm. The enzyme catalyses apo-[ACP] + CoA = holo-[ACP] + adenosine 3',5'-bisphosphate + H(+). In terms of biological role, transfers the 4'-phosphopantetheine moiety from coenzyme A to a Ser of acyl-carrier-protein. In Cupriavidus pinatubonensis (strain JMP 134 / LMG 1197) (Cupriavidus necator (strain JMP 134)), this protein is Holo-[acyl-carrier-protein] synthase.